Consider the following 734-residue polypeptide: Probable inactive histone-lysine N-methyltransferase SUVR1 (734 aa).

Residues Gln-61 to Arg-163 form a disordered region. The span at Ser-62–Ser-81 shows a compositional bias: basic and acidic residues. Positions Val-98 to Glu-109 are enriched in acidic residues. Residues Lys-113–Arg-122 show a composition bias toward basic residues. The span at Ala-123–Ser-132 shows a compositional bias: low complexity. The Zn(2+) site is built by Cys-460, Cys-464, Cys-468, Cys-477, Cys-545, Cys-549, Cys-551, and Cys-555. Residues Cys-460 to Gly-563 form the Pre-SET domain. The 131-residue stretch at Asn-566–Gly-696 folds into the SET domain. S-adenosyl-L-methionine is bound by residues Lys-577–Trp-579 and Asn-652–His-653. Residue Cys-655 participates in Zn(2+) binding. Residue Tyr-695 participates in S-adenosyl-L-methionine binding. One can recognise a Post-SET domain in the interval Lys-707–Arg-723. Positions 711, 713, and 718 each coordinate Zn(2+).

The protein belongs to the class V-like SAM-binding methyltransferase superfamily. Histone-lysine methyltransferase family. As to quaternary structure, interacts with SUVR2 and itself.

The protein localises to the nucleus. It is found in the chromosome. Probable inactive histone-lysine methyltransferase that acts as regulator of transctiptional gene silencing independently of histone H3K9 methylation. Contributes to transcriptional gene silencing at RNA-directed DNA methylation (RdDM) target loci but also at RdDM-independent target loci. This Arabidopsis thaliana (Mouse-ear cress) protein is Probable inactive histone-lysine N-methyltransferase SUVR1 (SUVR1).